The chain runs to 900 residues: Chromodomain-helicase-DNA-binding protein 1-like (900 aa).

The Helicase ATP-binding domain maps to 52–217 (VQCFHCQNGC…YSLLCVVEPD (166 aa)). 65–72 (DEMGLGKT) contributes to the ATP binding site. A DEAH box motif is present at residues 168-171 (DEAH). The Helicase C-terminal domain maps to 345 to 507 (LLDRLLAFLY…QKPSAEADFQ (163 aa)). Serine 534 is modified (phosphoserine). Residues 546–569 (PDALPAAAAAGGGSLEPEEGSELE) are disordered. A regulatory linker segment (RLS) region spans residues 606–640 (TLLEKTSHGGRTLRNKGSVLIPGLAEGPIKRKKIL). 3 positions are modified to phosphoserine: serine 612, serine 623, and serine 641. Positions 620-678 (NKGSVLIPGLAEGPIKRKKILSPEELEDRRKKRQEAAAKRKRLMEEKRKEKEEAEHRKK) are required for ATPase activity. The disordered stretch occupies residues 641–673 (SPEELEDRRKKRQEAAAKRKRLMEEKRKEKEEA). A coiled-coil region spans residues 643–680 (EELEDRRKKRQEAAAKRKRLMEEKRKEKEEAEHRKKMA). Residues 653 to 673 (QEAAAKRKRLMEEKRKEKEEA) show a composition bias toward basic and acidic residues. One can recognise a Macro domain in the interval 709-900 (SAELAYEDLD…ASSSSAPLVP (192 aa)). Position 894 is a phosphoserine (serine 894).

It belongs to the SNF2/RAD54 helicase family. Interacts with nucleosomes; interacts with the acidic patch of histones. Interacts (via macro domain) with PARP1; interacts only when PARP1 is poly-ADP-ribosylated (PARylated). Interacts with CIAO1.

Its subcellular location is the nucleus. The protein resides in the chromosome. It carries out the reaction ATP + H2O = ADP + phosphate + H(+). Its activity is regulated as follows. Adopts an inactive conformation in absence of DNA damage. Binding to poly-ADP-ribosylated histones activates the ATP-dependent chromatin remodeler activity. In terms of biological role, ATP-dependent chromatin remodeler that mediates chromatin-remodeling following DNA damage. Recruited to DNA damage sites through interaction with poly-ADP-ribose: specifically recognizes and binds histones that are poly-ADP-ribosylated on serine residues in response to DNA damage. Poly-ADP-ribose-binding activates the ATP-dependent chromatin remodeler activity, thereby regulating chromatin during DNA repair. Catalyzes nucleosome sliding away from DNA breaks in an ATP-dependent manner. Chromatin remodeling activity promotes PARP2 removal from chromatin. This Mus musculus (Mouse) protein is Chromodomain-helicase-DNA-binding protein 1-like (Chd1l).